Here is a 588-residue protein sequence, read N- to C-terminus: Synaptotagmin-3 (588 aa).

Residues 1-54 (MSGDYEDDLCRRALILVSDLCARIRDADTNDRCQEFNELRIRGYPRGPDADISV) are Vesicular-facing. Residues 10–34 (CRRALILVSDLCARIRDADTNDRCQ) are cysteine motif. Residues 55-75 (SLLSVIVTFCGIVLLGVSLFV) traverse the membrane as a helical segment. Residues 76-588 (SWKLCWVPWR…KGLSEKENSE (513 aa)) lie on the Cytoplasmic side of the membrane. Disordered stretches follow at residues 129-161 (GGPH…PEPS), 183-222 (PSQT…VTSL), and 238-257 (QTLT…ALPL). Residues 183 to 205 (PSQTSPELPSEGGTGSGLLLLPP) are compositionally biased toward low complexity. Residues 213–222 (AQSHQQVTSL) are compositionally biased toward polar residues. Omega-N-methylarginine is present on Arg286. C2 domains are found at residues 297–418 (PCGR…PLWR) and 429–563 (DLGE…EHWH). Ca(2+)-binding residues include Asp328, Asp334, Asp386, Phe387, Asp388, Ser391, Asp394, Asp460, Asp466, Asp520, and Asp522.

It belongs to the synaptotagmin family. Homodimer; disulfide-linked via the cysteine motif. Can also form heterodimers with SYT6, SYT9 and SYT10. Ca(2+) is required as a cofactor. In terms of tissue distribution, brain, various endocrine tissues and hormone-secreting clonal cells.

The protein resides in the cell membrane. It is found in the cytoplasmic vesicle. It localises to the secretory vesicle membrane. In terms of biological role, ca(2+) sensor involved in Ca(2+)-dependent exocytosis of secretory vesicles through Ca(2+) and phospholipid binding to the C2 domain. Ca(2+) induces binding of the C2-domains to phospholipid membranes and to assembled SNARE-complexes; both actions contribute to triggering exocytosis. Plays a role in dendrite formation by melanocytes. The sequence is that of Synaptotagmin-3 (Syt3) from Rattus norvegicus (Rat).